The primary structure comprises 476 residues: Amino acid permease 3 (476 aa).

Over 1-33 the chain is Cytoplasmic; the sequence is MVQNHQTVLAVDMPQTGGSKYLDDDGKNKRTGS. A helical transmembrane segment spans residues 34 to 54; that stretch reads VWTASAHIITAVIGSGVLSLA. At 55 to 57 the chain is on the extracellular side; that stretch reads WAT. A helical membrane pass occupies residues 58–78; the sequence is AQLGWLAGPVVMLLFSAVTYF. Over 79–122 the chain is Cytoplasmic; it reads TSSLLAACYRSGDPISGKRNYTYMDAVRSNLGGVKVTLCGIVQY. The chain crosses the membrane as a helical span at residues 123–143; the sequence is LNIFGVAIGYTIASAISMMAI. Residues 144–166 are Extracellular-facing; it reads KRSNCFHKSGGKDPCHMNSNPYM. The next 2 helical transmembrane spans lie at 167-187 and 188-208; these read IAFG…QLWW and LSIL…ALGI. The Extracellular segment spans residues 209-277; that stretch reads AQVVVNGKVK…EEKTMKKATL (69 aa). The chain crosses the membrane as a helical span at residues 278-298; it reads VSVSVTTMFYMLCGCMGYAAF. Topologically, residues 299 to 300 are cytoplasmic; the sequence is GD. Residues 301 to 321 traverse the membrane as a helical segment; it reads LSPGNLLTGFGFYNPYWLLDI. Residues 322-324 lie on the Extracellular side of the membrane; that stretch reads ANA. Residues 325–345 traverse the membrane as a helical segment; the sequence is AIVIHLIGAYQVYCQPLFAFI. Over 346–384 the chain is Cytoplasmic; it reads EKQASIQFPDSEFIAKDIKIPIPGFKPLRLNVFRLIWRT. 2 helical membrane passes run 385–405 and 406–426; these read VFVI…DVVG and LLGA…MYIA. Residues 427 to 441 are Cytoplasmic-facing; that stretch reads QKKIPRWSTRWVCLQ. A helical transmembrane segment spans residues 442–462; that stretch reads VFSLGCLVVSIAAAAGSIAGV. Topologically, residues 463 to 476 are extracellular; that stretch reads LLDLKSYKPFRSEY.

The protein belongs to the amino acid/polyamine transporter 2 family. Amino acid/auxin permease (AAAP) (TC 2.A.18.2) subfamily. Expressed in the root phloem. Detected in stamens, in cotyledons, and in major veins of mature leaves.

Its subcellular location is the cell membrane. The protein localises to the nucleus membrane. The protein resides in the endomembrane system. Its activity is regulated as follows. Inhibited by carbonylcyanide m-chlorophenylhydrazone and 2,4-dinitrophenol. Functionally, amino acid-proton symporter. Stereospecific transporter with a broad specificity for GABA, tryptophan and both neutral and basic amino acids. High affinity transport of cationic amino acids. In Arabidopsis thaliana (Mouse-ear cress), this protein is Amino acid permease 3 (AAP3).